A 293-amino-acid polypeptide reads, in one-letter code: Fructose-bisphosphate aldolase (293 aa).

Residue Ser50 participates in D-glyceraldehyde 3-phosphate binding. Asp85 acts as the Proton donor in catalysis. 4 residues coordinate Zn(2+): His86, Asp106, Glu136, and His178. A dihydroxyacetone phosphate-binding site is contributed by Gly179. Position 208 (His208) interacts with Zn(2+). Residues 209-211 (GGS) and 230-233 (NVNT) contribute to the dihydroxyacetone phosphate site.

The protein belongs to the class II fructose-bisphosphate aldolase family. It depends on Zn(2+) as a cofactor.

It catalyses the reaction beta-D-fructose 1,6-bisphosphate = D-glyceraldehyde 3-phosphate + dihydroxyacetone phosphate. It participates in carbohydrate degradation; glycolysis; D-glyceraldehyde 3-phosphate and glycerone phosphate from D-glucose: step 4/4. In terms of biological role, catalyzes the aldol condensation of dihydroxyacetone phosphate (DHAP or glycerone-phosphate) with glyceraldehyde 3-phosphate (G3P) to form fructose 1,6-bisphosphate (FBP) in gluconeogenesis and the reverse reaction in glycolysis. The polypeptide is Fructose-bisphosphate aldolase (fba) (Streptococcus pneumoniae serotype 4 (strain ATCC BAA-334 / TIGR4)).